The following is a 308-amino-acid chain: rRNA 2'-O-methyltransferase fibrillarin 1 (308 aa).

Positions 1–68 (MRPPVTGGRG…PRGGMKGGSK (68 aa)) are disordered. The span at 22–35 (GRGFGGGRSFGGGR) shows a compositional bias: gly residues. Positions 42-52 (SGPRGRGRGAP) are enriched in basic residues. Positions 53–65 (RGRGGPPRGGMKG) are enriched in gly residues. S-adenosyl-L-methionine is bound by residues 156 to 157 (TT), 175 to 176 (EF), 200 to 201 (DA), and 220 to 223 (DVAQ).

The protein belongs to the methyltransferase superfamily. Fibrillarin family. Component of box C/D small nucleolar ribonucleoprotein (snoRNP) particles. Interacts with SKP1A. In terms of tissue distribution, expressed in roots, leaves and flowers. Expressed in stems.

Its subcellular location is the nucleus. The protein localises to the nucleolus. The enzyme catalyses a ribonucleotide in rRNA + S-adenosyl-L-methionine = a 2'-O-methylribonucleotide in rRNA + S-adenosyl-L-homocysteine + H(+). It catalyses the reaction L-glutaminyl-[histone H2A] + S-adenosyl-L-methionine = N(5)-methyl-L-glutaminyl-[histone H2A] + S-adenosyl-L-homocysteine + H(+). Its function is as follows. S-adenosyl-L-methionine-dependent methyltransferase that has the ability to methylate both RNAs and proteins. Involved in pre-rRNA processing. Utilizes the methyl donor S-adenosyl-L-methionine to catalyze the site-specific 2'-hydroxyl methylation of ribose moieties in pre-ribosomal RNA. Site specificity is provided by a guide RNA that base pairs with the substrate. Methylation occurs at a characteristic distance from the sequence involved in base pairing with the guide RNA. Also acts as a protein methyltransferase by mediating methylation of 'Gln-105' of histone H2A (H2AQ105me), a modification that impairs binding of the FACT complex and is specifically present at 35S ribosomal DNA locus. Binds monophosphate phosphoinositides in vitro. The protein is rRNA 2'-O-methyltransferase fibrillarin 1 of Arabidopsis thaliana (Mouse-ear cress).